The primary structure comprises 557 residues: Calcium-dependent protein kinase 4 (557 aa).

Residues 1–72 (MGNTCRGSIG…LVSPRKASMN (72 aa)) are disordered. A lipid anchor (N-myristoyl glycine) is attached at G2. Residues 15–27 (QGYTQPEDSSCST) show a composition bias toward polar residues. Residues 28–48 (NHNPSSGNSYSSSDNFSPTSN) show a composition bias toward low complexity. A Protein kinase domain is found at 94–352 (YTLGRKLGQG…AHEVLCHPWI (259 aa)). ATP contacts are provided by residues 100–108 (LGQGQFGTT) and K123. The active-site Proton acceptor is D218. Residues 358-388 (APDRALDPAVLSRLKQFSAMNKLKKMALRVI) are autoinhibitory domain. EF-hand domains are found at residues 395–430 (EEIAGLREMFKAMDTDSSGAITFDELKAGLRKYGST), 431–466 (LKDTEIRELMDAADVDNSGTIDYGEFIAATVHLNKL), 467–502 (EREEHLMAAFQYFDKDGSGYITVDEVQQACIEHNMT), and 506–536 (FEDIIREVDQDNDGRIDYGEFVAMMQKGNPC). Ca(2+) contacts are provided by D408, D410, S412, E419, D444, D446, S448, T450, E455, D480, D482, S484, Y486, E491, D514, D516, D518, R520, and E525.

This sequence belongs to the protein kinase superfamily. Ser/Thr protein kinase family. CDPK subfamily.

Its subcellular location is the membrane. It catalyses the reaction L-seryl-[protein] + ATP = O-phospho-L-seryl-[protein] + ADP + H(+). It carries out the reaction L-threonyl-[protein] + ATP = O-phospho-L-threonyl-[protein] + ADP + H(+). Activated by calcium. Autophosphorylation may play an important role in the regulation of the kinase activity. Functionally, regulates the production of reactive oxygen species (ROS) by NADPH oxidase. In Solanum tuberosum (Potato), this protein is Calcium-dependent protein kinase 4 (CPK4).